An 88-amino-acid chain; its full sequence is uncharacterized protein (88 aa).

The chain crosses the membrane as a helical span at residues 34–54 (IIIAVILIFFLTIVGLFYLII).

It is found in the membrane. This is an uncharacterized protein from Ureaplasma parvum serovar 3 (strain ATCC 700970).